The sequence spans 271 residues: Bifunctional protein FolD (271 aa).

NADP(+) is bound by residues 154–156, Ser-181, and Ile-222; that span reads GRS.

The protein belongs to the tetrahydrofolate dehydrogenase/cyclohydrolase family. As to quaternary structure, homodimer.

The catalysed reaction is (6R)-5,10-methylene-5,6,7,8-tetrahydrofolate + NADP(+) = (6R)-5,10-methenyltetrahydrofolate + NADPH. It catalyses the reaction (6R)-5,10-methenyltetrahydrofolate + H2O = (6R)-10-formyltetrahydrofolate + H(+). It participates in one-carbon metabolism; tetrahydrofolate interconversion. Functionally, catalyzes the oxidation of 5,10-methylenetetrahydrofolate to 5,10-methenyltetrahydrofolate and then the hydrolysis of 5,10-methenyltetrahydrofolate to 10-formyltetrahydrofolate. The sequence is that of Bifunctional protein FolD from Thermotoga petrophila (strain ATCC BAA-488 / DSM 13995 / JCM 10881 / RKU-1).